We begin with the raw amino-acid sequence, 787 residues long: Ribonucleoside-diphosphate reductase large subunit (787 aa).

Substrate is bound by residues Thr-209, 224 to 225 (SC), Gly-255, 436 to 440 (NLCTE), and 618 to 622 (PTVSS). The cysteines at positions 225 and 453 are disulfide-linked. Asn-436 (proton acceptor) is an active-site residue. Cys-438 serves as the catalytic Cysteine radical intermediate. Glu-440 (proton acceptor) is an active-site residue.

This sequence belongs to the ribonucleoside diphosphate reductase large chain family. In terms of assembly, heterotetramer composed of a homodimer of the large subunit (R1) and a homodimer of the small subunit (R2). Larger multisubunit protein complex are also active, composed of (R1)n(R2)n.

It catalyses the reaction a 2'-deoxyribonucleoside 5'-diphosphate + [thioredoxin]-disulfide + H2O = a ribonucleoside 5'-diphosphate + [thioredoxin]-dithiol. Functionally, ribonucleoside-diphosphate reductase holoenzyme provides the precursors necessary for viral DNA synthesis. Allows virus growth in non-dividing cells, as well as reactivation from latency in infected hosts. Catalyzes the biosynthesis of deoxyribonucleotides from the corresponding ribonucleotides. The protein is Ribonucleoside-diphosphate reductase large subunit of Bos taurus (Bovine).